Consider the following 307-residue polypeptide: HPr kinase/phosphorylase (307 aa).

Active-site residues include histidine 136 and lysine 157. 151-158 (GESGIGKS) contributes to the ATP binding site. Serine 158 serves as a coordination point for Mg(2+). Aspartate 175 acts as the Proton acceptor; for phosphorylation activity. Proton donor; for dephosphorylation activity in catalysis. Residues 198 to 207 (LEVRGMGIID) form an important for the catalytic mechanism of both phosphorylation and dephosphorylation region. Glutamate 199 lines the Mg(2+) pocket. The active site involves arginine 240. Residues 261 to 266 (PIRPGR) are important for the catalytic mechanism of dephosphorylation.

It belongs to the HPrK/P family. In terms of assembly, homohexamer. Mg(2+) serves as cofactor.

The enzyme catalyses [HPr protein]-L-serine + ATP = [HPr protein]-O-phospho-L-serine + ADP + H(+). It carries out the reaction [HPr protein]-O-phospho-L-serine + phosphate + H(+) = [HPr protein]-L-serine + diphosphate. Its function is as follows. Catalyzes the ATP- as well as the pyrophosphate-dependent phosphorylation of a specific serine residue in HPr, a phosphocarrier protein of the phosphoenolpyruvate-dependent sugar phosphotransferase system (PTS). HprK/P also catalyzes the pyrophosphate-producing, inorganic phosphate-dependent dephosphorylation (phosphorolysis) of seryl-phosphorylated HPr (P-Ser-HPr). The two antagonistic activities of HprK/P are regulated by several intracellular metabolites, which change their concentration in response to the absence or presence of rapidly metabolisable carbon sources (glucose, fructose, etc.) in the growth medium. Therefore, by controlling the phosphorylation state of HPr, HPrK/P is a sensor enzyme that plays a major role in the regulation of carbon metabolism and sugar transport: it mediates carbon catabolite repression (CCR), and regulates PTS-catalyzed carbohydrate uptake and inducer exclusion. In Clostridium perfringens (strain 13 / Type A), this protein is HPr kinase/phosphorylase.